Here is a 77-residue protein sequence, read N- to C-terminus: Cysteine-rich protein 1 (77 aa).

One can recognise an LIM zinc-binding domain in the interval 2–63; that stretch reads PKCPKCSKEV…HPCYAAMFGP (62 aa). An N6-acetyllysine mark is found at K9 and K22. R68 carries the post-translational modification Omega-N-methylarginine.

Its function is as follows. Seems to have a role in zinc absorption and may function as an intracellular zinc transport protein. The sequence is that of Cysteine-rich protein 1 (CRIP1) from Bos taurus (Bovine).